The following is a 232-amino-acid chain: Large ribosomal subunit protein uL16m (232 aa).

The transit peptide at 1 to 41 (MFPYLTRMNLSIKMGGLTLKESSPNAFLNNTTIARRFKHEY) directs the protein to the mitochondrion.

This sequence belongs to the universal ribosomal protein uL16 family. As to quaternary structure, component of the mitochondrial large ribosomal subunit (mt-LSU). Mature yeast 74S mitochondrial ribosomes consist of a small (37S) and a large (54S) subunit. The 37S small subunit contains a 15S ribosomal RNA (15S mt-rRNA) and 34 different proteins. The 54S large subunit contains a 21S rRNA (21S mt-rRNA) and 46 different proteins.

Its subcellular location is the mitochondrion. Component of the mitochondrial ribosome (mitoribosome), a dedicated translation machinery responsible for the synthesis of mitochondrial genome-encoded proteins, including at least some of the essential transmembrane subunits of the mitochondrial respiratory chain. The mitoribosomes are attached to the mitochondrial inner membrane and translation products are cotranslationally integrated into the membrane. This chain is Large ribosomal subunit protein uL16m (MRPL16), found in Saccharomyces cerevisiae (strain ATCC 204508 / S288c) (Baker's yeast).